The sequence spans 698 residues: Probable Xaa-Pro aminopeptidase P (698 aa).

Residues Asp509, Asp520, Glu604, and Glu618 each contribute to the Mn(2+) site.

Belongs to the peptidase M24B family. Requires Mn(2+) as cofactor.

The catalysed reaction is Release of any N-terminal amino acid, including proline, that is linked to proline, even from a dipeptide or tripeptide.. In terms of biological role, catalyzes the removal of a penultimate prolyl residue from the N-termini of peptides. The chain is Probable Xaa-Pro aminopeptidase P (AMPP) from Arthroderma benhamiae (strain ATCC MYA-4681 / CBS 112371) (Trichophyton mentagrophytes).